We begin with the raw amino-acid sequence, 369 residues long: Cobalt-precorrin-5B C(1)-methyltransferase (369 aa).

Belongs to the CbiD family.

It carries out the reaction Co-precorrin-5B + S-adenosyl-L-methionine = Co-precorrin-6A + S-adenosyl-L-homocysteine. The protein operates within cofactor biosynthesis; adenosylcobalamin biosynthesis; cob(II)yrinate a,c-diamide from sirohydrochlorin (anaerobic route): step 6/10. Catalyzes the methylation of C-1 in cobalt-precorrin-5B to form cobalt-precorrin-6A. The chain is Cobalt-precorrin-5B C(1)-methyltransferase from Brucella melitensis biotype 2 (strain ATCC 23457).